Reading from the N-terminus, the 282-residue chain is Nucleotide-binding protein in ptsN-ptsO intergenic region (282 aa).

8 to 15 contacts ATP; it reads GRSGSGKS. 56-59 is a GTP binding site; that stretch reads DVRN.

It belongs to the RapZ-like family.

In terms of biological role, displays ATPase and GTPase activities. The protein is Nucleotide-binding protein in ptsN-ptsO intergenic region of Shewanella violacea.